Reading from the N-terminus, the 235-residue chain is Pyridoxine 5'-phosphate synthase (235 aa).

N6 lines the 3-amino-2-oxopropyl phosphate pocket. Position 8–9 (8–9 (DH)) interacts with 1-deoxy-D-xylulose 5-phosphate. R17 provides a ligand contact to 3-amino-2-oxopropyl phosphate. Residue H42 is the Proton acceptor of the active site. 1-deoxy-D-xylulose 5-phosphate-binding residues include R44 and H49. E69 acts as the Proton acceptor in catalysis. T99 contacts 1-deoxy-D-xylulose 5-phosphate. H188 serves as the catalytic Proton donor. 3-amino-2-oxopropyl phosphate is bound by residues G189 and 210–211 (GH).

It belongs to the PNP synthase family. Homooctamer; tetramer of dimers.

It localises to the cytoplasm. It carries out the reaction 3-amino-2-oxopropyl phosphate + 1-deoxy-D-xylulose 5-phosphate = pyridoxine 5'-phosphate + phosphate + 2 H2O + H(+). Its pathway is cofactor biosynthesis; pyridoxine 5'-phosphate biosynthesis; pyridoxine 5'-phosphate from D-erythrose 4-phosphate: step 5/5. Functionally, catalyzes the complicated ring closure reaction between the two acyclic compounds 1-deoxy-D-xylulose-5-phosphate (DXP) and 3-amino-2-oxopropyl phosphate (1-amino-acetone-3-phosphate or AAP) to form pyridoxine 5'-phosphate (PNP) and inorganic phosphate. In Wolbachia pipientis subsp. Culex pipiens (strain wPip), this protein is Pyridoxine 5'-phosphate synthase.